The sequence spans 323 residues: Fructokinase-1 (323 aa).

This sequence belongs to the carbohydrate kinase PfkB family. As to expression, expressed in root, endosperm and leaf tissues.

It catalyses the reaction D-fructose + ATP = D-fructose 6-phosphate + ADP + H(+). The protein operates within glycan biosynthesis; starch biosynthesis. Its activity is regulated as follows. Completely inhibited at 50 mM ATP, but not inhibited at high fructose concentration. In terms of biological role, fructokinase that may play an important role in maintaining the flux of carbon towards starch formation. May also be involved in a sugar-sensing pathway. The polypeptide is Fructokinase-1 (Oryza sativa subsp. japonica (Rice)).